Reading from the N-terminus, the 475-residue chain is Cobyric acid synthase (475 aa).

The region spanning 244 to 431 is the GATase cobBQ-type domain; it reads KLNVVVPVLT…LHGFFDEADV (188 aa). Residue C325 is the Nucleophile of the active site. H423 is a catalytic residue.

The protein belongs to the CobB/CobQ family. CobQ subfamily.

Its pathway is cofactor biosynthesis; adenosylcobalamin biosynthesis. In terms of biological role, catalyzes amidations at positions B, D, E, and G on adenosylcobyrinic A,C-diamide. NH(2) groups are provided by glutamine, and one molecule of ATP is hydrogenolyzed for each amidation. This chain is Cobyric acid synthase, found in Vibrio campbellii (strain ATCC BAA-1116).